The chain runs to 262 residues: Acyl-[acyl-carrier-protein]--UDP-N-acetylglucosamine O-acyltransferase (262 aa).

Belongs to the transferase hexapeptide repeat family. LpxA subfamily. Homotrimer.

The protein localises to the cytoplasm. It carries out the reaction a (3R)-hydroxyacyl-[ACP] + UDP-N-acetyl-alpha-D-glucosamine = a UDP-3-O-[(3R)-3-hydroxyacyl]-N-acetyl-alpha-D-glucosamine + holo-[ACP]. Its pathway is glycolipid biosynthesis; lipid IV(A) biosynthesis; lipid IV(A) from (3R)-3-hydroxytetradecanoyl-[acyl-carrier-protein] and UDP-N-acetyl-alpha-D-glucosamine: step 1/6. Involved in the biosynthesis of lipid A, a phosphorylated glycolipid that anchors the lipopolysaccharide to the outer membrane of the cell. The polypeptide is Acyl-[acyl-carrier-protein]--UDP-N-acetylglucosamine O-acyltransferase (Wigglesworthia glossinidia brevipalpis).